A 134-amino-acid polypeptide reads, in one-letter code: Small ribosomal subunit protein uS11 (134 aa).

This sequence belongs to the universal ribosomal protein uS11 family. As to quaternary structure, part of the 30S ribosomal subunit. Interacts with proteins S7 and S18. Binds to IF-3.

Located on the platform of the 30S subunit, it bridges several disparate RNA helices of the 16S rRNA. Forms part of the Shine-Dalgarno cleft in the 70S ribosome. This is Small ribosomal subunit protein uS11 from Polaromonas sp. (strain JS666 / ATCC BAA-500).